The following is a 518-amino-acid chain: Putative succinate-semialdehyde dehydrogenase [NADP(+)] 2 (518 aa).

NADP(+)-binding positions include Trp-157–Asn-158, Lys-181–Ser-184, and Gly-232–Ser-233. The active-site Proton acceptor is Glu-254. Leu-255 contacts NADP(+). Cys-288 (nucleophile) is an active-site residue. Glu-386 provides a ligand contact to NADP(+).

This sequence belongs to the aldehyde dehydrogenase family.

It carries out the reaction succinate semialdehyde + NADP(+) + H2O = succinate + NADPH + 2 H(+). Its function is as follows. Catalyzes the NADP(+)-dependent oxidation of succinate semialdehyde to succinate. Although it has succinate semialdehyde dehydrogenase activity, is likely to act physiologically on a different aldehyde(s). This Mycobacterium bovis (strain ATCC BAA-935 / AF2122/97) protein is Putative succinate-semialdehyde dehydrogenase [NADP(+)] 2 (gabD2).